Consider the following 641-residue polypeptide: ATP-dependent DNA helicase PIF1 (641 aa).

Residues 1 to 180 (MLSGIEAAAG…LVKRPVEPQA (180 aa)) are PINT. Ser-27 and Ser-151 each carry phosphoserine. Residues 167–641 (PDTTLVKRPV…SDQENMDPIL (475 aa)) form a hydrolyzes ATP in the presence of both magnesium and single-stranded DNA; weak activity in the presence of RNA or double-stranded DNA; No unwinding activity region. The interval 173–192 (KRPVEPQAGAEPSTEAPRWP) is disordered. 228 to 235 (GSAGTGKS) lines the ATP pocket. The DNA-binding element occupies 577–596 (QAYVALSRARSLQGLRVLDF). The disordered stretch occupies residues 622–641 (LESPDDDEAASDQENMDPIL). Over residues 624–641 (SPDDDEAASDQENMDPIL) the composition is skewed to acidic residues.

The protein belongs to the helicase family. PIF1 subfamily. In terms of assembly, monomer. Interacts with telomerase. It depends on Mg(2+) as a cofactor. In terms of tissue distribution, weak ubiquitous expression.

Its subcellular location is the nucleus. It is found in the mitochondrion. It carries out the reaction Couples ATP hydrolysis with the unwinding of duplex DNA at the replication fork by translocating in the 5'-3' direction. This creates two antiparallel DNA single strands (ssDNA). The leading ssDNA polymer is the template for DNA polymerase III holoenzyme which synthesizes a continuous strand.. The catalysed reaction is ATP + H2O = ADP + phosphate + H(+). DNA-dependent ATPase and 5'-3' DNA helicase required for the maintenance of both mitochondrial and nuclear genome stability. Efficiently unwinds G-quadruplex (G4) DNA structures and forked RNA-DNA hybrids. Resolves G4 structures, preventing replication pausing and double-strand breaks (DSBs) at G4 motifs. Involved in the maintenance of telomeric DNA. Inhibits telomere elongation, de novo telomere formation and telomere addition to DSBs via catalytic inhibition of telomerase. Reduces the processivity of telomerase by displacing active telomerase from DNA ends. Releases telomerase by unwinding the short telomerase RNA/telomeric DNA hybrid that is the intermediate in the telomerase reaction. Possesses an intrinsic strand annealing activity. The chain is ATP-dependent DNA helicase PIF1 from Homo sapiens (Human).